Reading from the N-terminus, the 578-residue chain is A-type ATP synthase subunit A (578 aa).

Residue 228–235 (GPFGSGKT) participates in ATP binding.

It belongs to the ATPase alpha/beta chains family. In terms of assembly, has multiple subunits with at least A(3), B(3), C, D, E, F, H, I and proteolipid K(x).

The protein resides in the cell membrane. The catalysed reaction is ATP + H2O + 4 H(+)(in) = ADP + phosphate + 5 H(+)(out). Its function is as follows. Component of the A-type ATP synthase that produces ATP from ADP in the presence of a proton gradient across the membrane. The A chain is the catalytic subunit. This Methanosarcina barkeri (strain Fusaro / DSM 804) protein is A-type ATP synthase subunit A.